The primary structure comprises 379 residues: Zinc metalloproteinase nas-20 (379 aa).

The first 20 residues, 1-20, serve as a signal peptide directing secretion; the sequence is MKITVNFLLVALIGVPSVLS. A propeptide spanning residues 21–29 is cleaved from the precursor; the sequence is DRHITRDKR. The 179-residue stretch at 30 to 208 folds into the Peptidase M12A domain; it reads QAMRDYAKWE…VLLNKFYGCN (179 aa). N-linked (GlcNAc...) asparagine glycosylation is present at Asn67. 4 disulfide bridges follow: Cys70/Cys207, Cys91/Cys111, Cys209/Cys229, and Cys234/Cys243. His119 lines the Zn(2+) pocket. Glu120 is an active-site residue. The Zn(2+) site is built by His123 and His129. The N-linked (GlcNAc...) asparagine glycan is linked to Asn185. The EGF-like domain occupies 203-244; the sequence is KFYGCNCDNHPRKLDCKNGGYQNPANCEECLCTDGFNGQLCD. 2 N-linked (GlcNAc...) asparagine glycosylation sites follow: Asn337 and Asn370.

It depends on Zn(2+) as a cofactor.

It localises to the secreted. Its function is as follows. Metalloprotease. In Caenorhabditis elegans, this protein is Zinc metalloproteinase nas-20 (nas-20).